The chain runs to 364 residues: Mannitol-1-phosphate 5-dehydrogenase (364 aa).

6–17 (VLHFGAGNIGRG) is a binding site for NAD(+).

The protein belongs to the mannitol dehydrogenase family.

The catalysed reaction is D-mannitol 1-phosphate + NAD(+) = beta-D-fructose 6-phosphate + NADH + H(+). This is Mannitol-1-phosphate 5-dehydrogenase (mtlD) from Mycoplasma pneumoniae (strain ATCC 29342 / M129 / Subtype 1) (Mycoplasmoides pneumoniae).